Reading from the N-terminus, the 510-residue chain is MGNPLQISIFLVFCIFIQSSACGQGVGTEPFGRSLGATEASKPLKKPETRFLLFQDENDRLGCRLRPQHPETLQECGFNSSQPLIMIIHGWSVDGLLENWIWKIVSALKSRQSQPVNVGLVDWISLAYQHYTIAVQNTRIVGQDVAALLLWLEESAKFSRSKVHLIGYSLGAHVSGFAGSSMDGKNKIGRITGLDPAGPMFEGTSPNERLSPDDANFVDAIHTFTREHMGLSVGIKQPIAHYDFYPNGGSFQPGCHFLELYKHIAEHGLNAITQTIKCAHERSVHLFIDSLQHSDLQSIGFQCSDMGSFSQGLCLSCKKGRCNTLGYDIRKDRSGKSKRLFLITRAQSPFKVYHYQFKIQFINQIEKPVEPTFTMSLLGTKEEIKRIPITLGEGITSNKTYSFLITLDKDIGELILLKFKWENSAVWANVWNTVQTIMLWGIEPHHSGLILKTIWVKAGETQQRMTFCPENLDDLQLHPSQEKVFVNCEVKSKRLTESKEQMSQETHAKK.

Positions 1 to 21 (MGNPLQISIFLVFCIFIQSSA) are cleaved as a signal peptide. An N-linked (GlcNAc...) asparagine glycan is attached at asparagine 79. Residue serine 169 is the Nucleophile of the active site. Residue aspartate 195 is the Charge relay system of the active site. The interval 255–278 (CHFLELYKHIAEHGLNAITQTIKC) is essential for determining substrate specificity. Histidine 280 serves as the catalytic Charge relay system. Positions 353-487 (YHYQFKIQFI…HPSQEKVFVN (135 aa)) constitute a PLAT domain. Asparagine 398 carries an N-linked (GlcNAc...) asparagine glycan.

Belongs to the AB hydrolase superfamily. Lipase family. As to quaternary structure, homodimer.

It is found in the secreted. The catalysed reaction is a triacylglycerol + H2O = a diacylglycerol + a fatty acid + H(+). The enzyme catalyses a 1-acyl-sn-glycero-3-phosphocholine + H2O = sn-glycerol 3-phosphocholine + a fatty acid + H(+). It carries out the reaction a 1,2-diacyl-sn-glycero-3-phosphocholine + H2O = a 2-acyl-sn-glycero-3-phosphocholine + a fatty acid + H(+). It catalyses the reaction 1,2,3-tri-(9Z-octadecenoyl)-glycerol + H2O = di-(9Z)-octadecenoylglycerol + (9Z)-octadecenoate + H(+). The catalysed reaction is 1,2-di-(9Z-octadecenoyl)-sn-glycero-3-phosphocholine + H2O = (9Z-octadecenoyl)-sn-glycero-3-phosphocholine + (9Z)-octadecenoate + H(+). The enzyme catalyses 1,2,3-tributanoylglycerol + H2O = dibutanoylglycerol + butanoate + H(+). It carries out the reaction 1,2-dihexadecanoyl-sn-glycero-3-phosphocholine + H2O = hexadecanoyl-sn-glycero-3-phosphocholine + hexadecanoate + H(+). It catalyses the reaction 1,2-di-(9Z-octadecenoyl)-sn-glycerol + H2O = 2-(9Z-octadecenoyl)-glycerol + (9Z)-octadecenoate + H(+). The catalysed reaction is 1,2,3-tri-(9Z-octadecenoyl)-glycerol + H2O = 2,3-di-(9Z)-octadecenoyl-sn-glycerol + (9Z)-octadecenoate + H(+). The enzyme catalyses 1-(9Z-octadecenoyl)-sn-glycero-3-phospho-L-serine + H2O = sn-glycero-3-phospho-L-serine + (9Z)-octadecenoate + H(+). It carries out the reaction 1-hexadecanoyl-sn-glycero-3-phosphocholine + H2O = sn-glycerol 3-phosphocholine + hexadecanoate + H(+). It catalyses the reaction 1,3-di-(9Z-octadecenoyl)-glycerol + H2O = 3-(9Z-octadecenoyl)-sn-glycerol + (9Z)-octadecenoate + H(+). Its function is as follows. Catalyzes the hydrolysis of triglycerides and phospholipids present in circulating plasma lipoproteins, including chylomicrons, intermediate density lipoproteins (IDL), low density lipoproteins (LDL) of large size and high density lipoproteins (HDL), releasing free fatty acids (FFA) and smaller lipoprotein particles. Also exhibits lysophospholipase activity. Can hydrolyze both neutral lipid and phospholipid substrates but shows a greater binding affinity for neutral lipid substrates than phospholipid substrates. In native LDL, preferentially hydrolyzes the phosphatidylcholine species containing polyunsaturated fatty acids at sn-2 position. This chain is Hepatic triacylglycerol lipase (Lipc), found in Mus musculus (Mouse).